We begin with the raw amino-acid sequence, 58 residues long: Small ribosomal subunit protein bS21 (58 aa).

Belongs to the bacterial ribosomal protein bS21 family.

The polypeptide is Small ribosomal subunit protein bS21 (Lactobacillus johnsonii (strain CNCM I-12250 / La1 / NCC 533)).